The following is a 341-amino-acid chain: HTH-type transcriptional repressor PurR (341 aa).

Positions A2–V56 constitute an HTH lacI-type domain. A DNA-binding region (H-T-H motif) is located at residues I4–N23. Residues S48–V56 mediate DNA binding. Residues Y73, R190, T192, F221, and D275 each contribute to the hypoxanthine site.

As to quaternary structure, homodimer.

Its pathway is purine metabolism; purine nucleotide biosynthesis [regulation]. In terms of biological role, is the main repressor of the genes involved in the de novo synthesis of purine nucleotides, regulating purB, purC, purEK, purF, purHD, purL, purMN and guaBA expression. PurR is allosterically activated to bind its cognate DNA by binding the purine corepressors, hypoxanthine or guanine, thereby effecting transcription repression. This Salmonella typhi protein is HTH-type transcriptional repressor PurR.